The chain runs to 630 residues: Probable potassium transport system protein Kup (630 aa).

12 helical membrane-spanning segments follow: residues 17–37 (LAIA…LYSL), 51–71 (PSAI…VVGI), 105–125 (ITGL…GDAV), 144–164 (PQLS…LFWI), 175–195 (LFGP…IYHI), 218–238 (VLLA…AEAL), 255–275 (YVLV…LLLL), 283–303 (PFFL…STVA), 344–364 (IYVP…VIGF), 374–394 (YGIA…VVMV), 402–422 (LLVA…FGAN), and 428–448 (QGGW…MTWY).

Belongs to the HAK/KUP transporter (TC 2.A.72) family.

It is found in the cell inner membrane. The catalysed reaction is K(+)(in) + H(+)(in) = K(+)(out) + H(+)(out). Its function is as follows. Transport of potassium into the cell. Likely operates as a K(+):H(+) symporter. The sequence is that of Probable potassium transport system protein Kup from Burkholderia mallei (strain NCTC 10247).